Reading from the N-terminus, the 186-residue chain is UPF0340 protein M6_Spy1622 (186 aa).

The protein belongs to the UPF0340 family.

The chain is UPF0340 protein M6_Spy1622 from Streptococcus pyogenes serotype M6 (strain ATCC BAA-946 / MGAS10394).